Consider the following 509-residue polypeptide: Group 3 secretory phospholipase A2 (509 aa).

The N-terminal stretch at M1–G19 is a signal peptide. Residues E123 to R149 form a disordered region. Positions G150 to T291 are phospholipase A2-like. Ca(2+) contacts are provided by W158, G160, and G162. Disulfide bonds link C159-C181, C180-C220, C187-C213, and C211-C244. An N-linked (GlcNAc...) asparagine glycan is attached at N167. H184 is an active-site residue. D185 lines the Ca(2+) pocket. D214 is an active-site residue. The N-linked (GlcNAc...) asparagine glycan is linked to N280. Positions W283–P354 are disordered. The span at S284 to S296 shows a compositional bias: low complexity. Residues P302–S322 show a composition bias toward basic residues. N-linked (GlcNAc...) asparagine glycans are attached at residues N325, N396, and N439. Residues Q458–G482 form a disordered region. Residues Q463–Q473 are compositionally biased toward basic and acidic residues.

This sequence belongs to the phospholipase A2 family. The cofactor is Ca(2+). Post-translationally, N-glycosylation does not affect the catalytic activity, but is required for proper secretion. A nonglycosylated form is observed in several cell types. In several cell types, the N- and C-termini are cleaved off. Expressed in kidney, heart, liver, and skeletal muscle. Also present in placenta and peripheral blood leukocytes. Not detected in colon, thymus, spleen and small intestine. In lung, expressed in bronchial epithelial cells and alveolar macrophages, but scarcely detected in alveolar epithelium, arterial walls and interstitial fibroblasts (at protein level). In joints of osteoarthritis and rheumatoid arthritis, expressed in endothelial cells (at protein level). In normal heart, detected in some vessels. In myocardial tissues with acute infarction, expressed in vascular endothelial cells adjacent to cardiomyocytes and those in lesions with granulation. Expression in cardiomyocytes is scarce (at protein level). In uterus, breast and colon cancers, detected in tumor cells and neighboring microvascular endothelium, but not in normal glandular tissues (at protein level). Expressed in dermal resting mast cells (at protein level) and pulmonary mast cells. Expressed in neuronal fibers (at protein level). Highly expressed in dorsal root ganglia neurons (at protein level). Expressed in Purkinje cells in cerebellum (at protein level). In stomach is preferentially expressed in neuronal fibers and in microvascular endothelium. Sparsely expressed in normal aorta (at protein level). Highly expressed in macrophages and smooth muscle cells in aorta with atheroma.

The protein resides in the secreted. Its subcellular location is the cell membrane. The protein localises to the cytoplasm. It localises to the cytoskeleton. It is found in the microtubule organizing center. The protein resides in the centrosome. Its subcellular location is the centriole. The protein localises to the recycling endosome. The enzyme catalyses a 1,2-diacyl-sn-glycero-3-phosphocholine + H2O = a 1-acyl-sn-glycero-3-phosphocholine + a fatty acid + H(+). It carries out the reaction 1-hexadecanoyl-2-(9Z,12Z-octadecadienoyl)-sn-glycero-3-phosphocholine + H2O = (9Z,12Z)-octadecadienoate + 1-hexadecanoyl-sn-glycero-3-phosphocholine + H(+). It catalyses the reaction 1-hexadecanoyl-2-(5Z,8Z,11Z,14Z-eicosatetraenoyl)-sn-glycero-3-phosphocholine + H2O = 1-hexadecanoyl-sn-glycero-3-phosphocholine + (5Z,8Z,11Z,14Z)-eicosatetraenoate + H(+). The catalysed reaction is 1-hexadecanoyl-2-(9Z,12Z-octadecadienoyl)-sn-glycero-3-phosphoethanolamine + H2O = 1-hexadecanoyl-sn-glycero-3-phosphoethanolamine + (9Z,12Z)-octadecadienoate + H(+). The enzyme catalyses 1-hexadecanoyl-2-(5Z,8Z,11Z,14Z-eicosatetraenoyl)-sn-glycero-3-phosphoethanolamine + H2O = 1-hexadecanoyl-sn-glycero-3-phosphoethanolamine + (5Z,8Z,11Z,14Z)-eicosatetraenoate + H(+). Arachidonic acid release is markedly increased by glypican, a glycosylphosphatidylinositol-anchored heparan sulfate proteoglycan. Functionally, secretory calcium-dependent phospholipase A2 that primarily targets extracellular phospholipids. Hydrolyzes the ester bond of the fatty acyl group attached at sn-2 position of phospholipids without apparent head group selectivity. Contributes to phospholipid remodeling of low-density lipoprotein (LDL) and high-density lipoprotein (HDL) particles. Hydrolyzes LDL phospholipids releasing unsaturated fatty acids that regulate macrophage differentiation toward foam cells. May act in an autocrine and paracrine manner. Secreted by immature mast cells, acts on nearby fibroblasts upstream to PTDGS to synthesize prostaglandin D2 (PGD2), which in turn promotes mast cell maturation and degranulation via PTGDR. Secreted by epididymal epithelium, acts on immature sperm cells within the duct, modulating the degree of unsaturation of the fatty acyl components of phosphatidylcholines required for acrosome assembly and sperm cell motility. Facilitates the replacement of fatty acyl chains in phosphatidylcholines in sperm membranes from omega-6 and omega-9 to omega-3 polyunsaturated fatty acids (PUFAs). Coupled to lipoxygenase pathway, may process omega-6 PUFAs to generate oxygenated lipid mediators in the male reproductive tract. At pericentrosomal preciliary compartment, negatively regulates ciliogenesis likely by regulating endocytotic recycling of ciliary membrane protein. Coupled to cyclooxygenase pathway provides arachidonate to generate prostaglandin E2 (PGE2), a potent immunomodulatory lipid in inflammation and tumorigenesis. At colonic epithelial barrier, preferentially hydrolyzes phospholipids having arachidonate and docosahexaenoate at sn-2 position, contributing to the generation of oxygenated metabolites involved in colonic stem cell homeostasis. Releases C16:0 and C18:0 lysophosphatidylcholine subclasses from neuron plasma membranes and promotes neurite outgrowth and neuron survival. The polypeptide is Group 3 secretory phospholipase A2 (Homo sapiens (Human)).